The following is a 209-amino-acid chain: Protein Sxy (209 aa).

It belongs to the Sxy/TfoX family.

Induces low levels of natural DNA uptake by inducing transcription of the competence genes (the CRP-S regulon) required for DNA transformation. Induction of the CRP-S regulon also requires Sxy-activated promoter (CRP-S), cAMP receptor protein (CRP) and cAMP. Induces CRP-S site-containing genes which are involved in genome maintenance and transcription or encoding transposases and toxin-antitoxin pairs. This is Protein Sxy from Escherichia coli (strain K12).